The primary structure comprises 768 residues: DNA topoisomerase 4 subunit A (768 aa).

One can recognise a Topo IIA-type catalytic domain in the interval 38 to 521; the sequence is LPEVSDGQKP…AGRAVLTQTA (484 aa). Tyr-126 (O-(5'-phospho-DNA)-tyrosine intermediate) is an active-site residue.

Belongs to the type II topoisomerase GyrA/ParC subunit family. ParC type 1 subfamily. In terms of assembly, heterotetramer composed of ParC and ParE.

The protein localises to the cell membrane. It catalyses the reaction ATP-dependent breakage, passage and rejoining of double-stranded DNA.. Functionally, topoisomerase IV is essential for chromosome segregation. It relaxes supercoiled DNA. Performs the decatenation events required during the replication of a circular DNA molecule. The sequence is that of DNA topoisomerase 4 subunit A from Neisseria gonorrhoeae.